A 581-amino-acid chain; its full sequence is MTDPDSYRSSITSRPSFNRTVTSSSQNYGAPGSGNRVLKIVTETHSSSVSSGLSPYGQNAASTIRDNREREKKEIMELNDRLASYIEKVRFLDAQNRKLDADLKMLQGRFGKSTGSVKVMYEMEITTATNVVKQTGKDHGETEKEIRKLQDQLDELRKKFEEAQRGRAEDRLKIDDLLVTLSNLEAEINLLKRRIALLEEEVARLKKENFRLTSELQRVRIELDQETLLRIDNQNKVKTILEEIDFMKRGFETELKELQAQAARDTTSENREYFKNELANAMRDIRAEYDQIMNGNRNDMESWYQLRVQEINTQSNRQNAENNYQKEEVKRLRNQTSELRQKLSDLESRNLLLEKQIEDLNYQLEDDQRSYEAALNDKDAQIRKLREECQALMVELQMLLDTKQTLDGELKVYRQMLEGNSEGNGLRQLVEKVVRTSAINEEADTETMRVVKGEHSSRTSYQRSAKGNVAIKETSPEGKFVILENTHRAKEEPLGDWKLKRKIDGKREIVFTFPSDYILHPFQSVKIFARGQGIANPPEVLIFEGDETFGVGANVQTILYNNKGEERATHIQRQSQQTTSS.

Disordered stretches follow at residues 1-35 and 47-68; these read MTDPDSYRSSITSRPSFNRTVTSSSQNYGAPGSGN and SSVSSGLSPYGQNAASTIRDNR. Positions 1–74 are head; the sequence is MTDPDSYRSS…RDNREREKKE (74 aa). Positions 7–28 are enriched in polar residues; that stretch reads YRSSITSRPSFNRTVTSSSQNY. Residues 71 to 424 form the IF rod domain; that stretch reads EKKEIMELND…QMLEGNSEGN (354 aa). A coil 1A region spans residues 75–106; sequence IMELNDRLASYIEKVRFLDAQNRKLDADLKML. Residues 107–120 are linker 1; it reads QGRFGKSTGSVKVM. The tract at residues 121–258 is coil 1B; it reads YEMEITTATN…RGFETELKEL (138 aa). A linker 12 region spans residues 259-276; sequence QAQAARDTTSENREYFKN. The coil 2 stretch occupies residues 277–424; the sequence is ELANAMRDIR…QMLEGNSEGN (148 aa). The interval 425–578 is tail; it reads GLRQLVEKVV…THIQRQSQQT (154 aa). Positions 449-469 are disordered; sequence RVVKGEHSSRTSYQRSAKGNV. Positions 457–574 constitute an LTD domain; the sequence is SRTSYQRSAK…EERATHIQRQ (118 aa).

Belongs to the intermediate filament family. Forms some heteromeric filaments with ifb-1. As to expression, mainly expressed in regions of the hypodermis adjacent to muscle. Expressed in longitudinal stripes where the mechanosensory neurons interface with the hypodermis. Also expressed to the uterine seam and within the uterine-vulval cells.

The protein resides in the cell junction. It is found in the hemidesmosome. Cytoplasmic intermediate filaments provide mechanical strength to cells. Essential protein, involved in attachment structures in epidermal cells that connect muscles to the external cuticle. Probably acts by forming hypodermal hemidesmosome complexes that help mediate muscle-cuticle force transduction. Although expressed during embryogenesis, it is not required for embryonic development of muscle-cuticle linkages nor for the localization of other proteins to the hemidesmosomes in embryos. The sequence is that of Intermediate filament protein ifa-2 from Caenorhabditis elegans.